A 202-amino-acid polypeptide reads, in one-letter code: Imidazole glycerol phosphate synthase subunit HisH (202 aa).

In terms of domain architecture, Glutamine amidotransferase type-1 spans 3–202 (RIVIIDYGLG…KILKNFVEMC (200 aa)). The Nucleophile role is filled by cysteine 79. Residues histidine 183 and glutamate 185 contribute to the active site.

As to quaternary structure, heterodimer of HisH and HisF.

It is found in the cytoplasm. The enzyme catalyses 5-[(5-phospho-1-deoxy-D-ribulos-1-ylimino)methylamino]-1-(5-phospho-beta-D-ribosyl)imidazole-4-carboxamide + L-glutamine = D-erythro-1-(imidazol-4-yl)glycerol 3-phosphate + 5-amino-1-(5-phospho-beta-D-ribosyl)imidazole-4-carboxamide + L-glutamate + H(+). It carries out the reaction L-glutamine + H2O = L-glutamate + NH4(+). The protein operates within amino-acid biosynthesis; L-histidine biosynthesis; L-histidine from 5-phospho-alpha-D-ribose 1-diphosphate: step 5/9. IGPS catalyzes the conversion of PRFAR and glutamine to IGP, AICAR and glutamate. The HisH subunit catalyzes the hydrolysis of glutamine to glutamate and ammonia as part of the synthesis of IGP and AICAR. The resulting ammonia molecule is channeled to the active site of HisF. The polypeptide is Imidazole glycerol phosphate synthase subunit HisH (Methanosarcina acetivorans (strain ATCC 35395 / DSM 2834 / JCM 12185 / C2A)).